The sequence spans 400 residues: S-adenosylmethionine decarboxylase proenzyme (400 aa).

Residues Glu-18 and Glu-21 contribute to the active site. Ser-78 serves as the catalytic Schiff-base intermediate with substrate; via pyruvic acid. Ser-78 bears the Pyruvic acid (Ser); by autocatalysis mark. Cys-92 serves as the catalytic Proton donor; for catalytic activity. Catalysis depends on proton acceptor; for processing activity residues Ser-243 and His-256.

It belongs to the eukaryotic AdoMetDC family. Pyruvate serves as cofactor. In terms of processing, is synthesized initially as an inactive proenzyme. Formation of the active enzyme involves a self-maturation process in which the active site pyruvoyl group is generated from an internal serine residue via an autocatalytic post-translational modification. Two non-identical subunits are generated from the proenzyme in this reaction, and the pyruvate is formed at the N-terminus of the alpha chain, which is derived from the carboxyl end of the proenzyme. The post-translation cleavage follows an unusual pathway, termed non-hydrolytic serinolysis, in which the side chain hydroxyl group of the serine supplies its oxygen atom to form the C-terminus of the beta chain, while the remainder of the serine residue undergoes an oxidative deamination to produce ammonia and the pyruvoyl group blocking the N-terminus of the alpha chain.

It catalyses the reaction S-adenosyl-L-methionine + H(+) = S-adenosyl 3-(methylsulfanyl)propylamine + CO2. The protein operates within amine and polyamine biosynthesis; S-adenosylmethioninamine biosynthesis; S-adenosylmethioninamine from S-adenosyl-L-methionine: step 1/1. This is S-adenosylmethionine decarboxylase proenzyme (SAMDC) from Zea mays (Maize).